Reading from the N-terminus, the 507-residue chain is ATP synthase subunit alpha (507 aa).

169–176 is an ATP binding site; that stretch reads GDRQTGKT.

The protein belongs to the ATPase alpha/beta chains family. In terms of assembly, F-type ATPases have 2 components, CF(1) - the catalytic core - and CF(0) - the membrane proton channel. CF(1) has five subunits: alpha(3), beta(3), gamma(1), delta(1), epsilon(1). CF(0) has three main subunits: a(1), b(2) and c(9-12). The alpha and beta chains form an alternating ring which encloses part of the gamma chain. CF(1) is attached to CF(0) by a central stalk formed by the gamma and epsilon chains, while a peripheral stalk is formed by the delta and b chains.

The protein resides in the cell membrane. The catalysed reaction is ATP + H2O + 4 H(+)(in) = ADP + phosphate + 5 H(+)(out). Functionally, produces ATP from ADP in the presence of a proton gradient across the membrane. The alpha chain is a regulatory subunit. This Desulforudis audaxviator (strain MP104C) protein is ATP synthase subunit alpha.